Here is a 170-residue protein sequence, read N- to C-terminus: N-glycosidase R617 (170 aa).

Belongs to the YbiA family.

It carries out the reaction 2,5-diamino-6-hydroxy-4-(5-phosphoribosylamino)-pyrimidine + H2O = 2,5,6-triamino-4-hydroxypyrimidine + D-ribose 5-phosphate. It catalyses the reaction 5-amino-6-(5-phospho-D-ribosylamino)uracil + H2O = 5,6-diaminouracil + D-ribose 5-phosphate. Catalyzes the hydrolysis of the N-glycosidic bond in the first two intermediates of riboflavin biosynthesis, which are highly reactive metabolites, yielding relatively innocuous products. Thus, can divert a surplus of harmful intermediates into relatively harmless products and pre-empt the damage these intermediates would otherwise do. May act on other substrates in vivo. In Acanthamoeba polyphaga mimivirus (APMV), this protein is N-glycosidase R617.